Consider the following 168-residue polypeptide: I-Kappa-B like protein G2 (168 aa).

2 ANK repeats span residues 56–88 (SQRQ…DING) and 93–123 (GGNT…NKTA).

This sequence belongs to the polydnaviridae I-Kappa-B-like protein family.

Its function is as follows. Suppresses the host immune response through NF-kappa-B inactivation. Possesses ankyrin repeat domains required for NF-kappa-B binding but lacks the regulatory regions required for dissociation from NF-kappa-B and degradation. Therefore, prevents host NF-kappa-B release and subsequent activation. The polypeptide is I-Kappa-B like protein G2 (G4) (Microplitis demolitor (Parasitoid wasp)).